The following is a 297-amino-acid chain: tRNA pseudouridine synthase A (297 aa).

The Nucleophile role is filled by Asp-57. Tyr-115 contacts substrate.

This sequence belongs to the tRNA pseudouridine synthase TruA family. As to quaternary structure, homodimer.

It carries out the reaction uridine(38/39/40) in tRNA = pseudouridine(38/39/40) in tRNA. Functionally, formation of pseudouridine at positions 38, 39 and 40 in the anticodon stem and loop of transfer RNAs. The protein is tRNA pseudouridine synthase A of Nitratidesulfovibrio vulgaris (strain ATCC 29579 / DSM 644 / CCUG 34227 / NCIMB 8303 / VKM B-1760 / Hildenborough) (Desulfovibrio vulgaris).